A 284-amino-acid polypeptide reads, in one-letter code: Probable endonuclease 4 (284 aa).

H69, H109, E145, D179, H182, H216, D229, H231, and E261 together coordinate Zn(2+).

This sequence belongs to the AP endonuclease 2 family. Zn(2+) is required as a cofactor.

The enzyme catalyses Endonucleolytic cleavage to 5'-phosphooligonucleotide end-products.. In terms of biological role, endonuclease IV plays a role in DNA repair. It cleaves phosphodiester bonds at apurinic or apyrimidinic (AP) sites, generating a 3'-hydroxyl group and a 5'-terminal sugar phosphate. This Klebsiella pneumoniae subsp. pneumoniae (strain ATCC 700721 / MGH 78578) protein is Probable endonuclease 4.